A 98-amino-acid chain; its full sequence is Large ribosomal subunit protein uL23 (98 aa).

It belongs to the universal ribosomal protein uL23 family. Part of the 50S ribosomal subunit. Contacts protein L29, and trigger factor when it is bound to the ribosome.

In terms of biological role, one of the early assembly proteins it binds 23S rRNA. One of the proteins that surrounds the polypeptide exit tunnel on the outside of the ribosome. Forms the main docking site for trigger factor binding to the ribosome. The protein is Large ribosomal subunit protein uL23 of Bifidobacterium animalis subsp. lactis (strain AD011).